Here is a 198-residue protein sequence, read N- to C-terminus: MQLSNFLSIWALVAMGATAAPMPSGSAPGNPFADGEAYGARPSQGLTPVPKVHDGSYHSCETCAAPFRTEERLAAHRQADHGNQGAAARGSGRHTSKNRGSSKTSERERLDRLASRVGEDYVEKRSQEATEEQEQGHVKPGRSKKEIAQRIRNLPVTPWNQYGAAVKLDKPTRKEQYRQLPGNDRLTPFEEQGDPVQL.

The first 19 residues, 1-19 (MQLSNFLSIWALVAMGATA), serve as a signal peptide directing secretion. Disordered regions lie at residues 21-59 (PMPSGSAPGNPFADGEAYGARPSQGLTPVPKVHDGSYHS) and 71-198 (ERLA…PVQL). The C2H2-type zinc-finger motif lies at 58–81 (HSCETCAAPFRTEERLAAHRQADH). Basic and acidic residues-rich tracts occupy residues 71 to 80 (ERLAAHRQAD), 104 to 128 (TSERERLDRLASRVGEDYVEKRSQE), and 167 to 177 (KLDKPTRKEQY).

The protein resides in the secreted. It localises to the host nucleus. In terms of biological role, secreted effector that translocates into the nuclei of host cells to reprogram the expression of immunity-associated genes by binding to effector binding elements (EBEs) in rice. Binds the 5'-CAATCTTC-3' EBE of promoters from targeted rice genes and probably recruits a yet to be determined host repressor. Causes ambivalent immunity with increased susceptibility to the hemibiotrophic pathogens Magnaporthe oryzae and Xanthomonas oryzae pv. oryzae, but enhances resistance to Cochliobolus miyabeanus, a necrotrophic pathogen. In Pyricularia oryzae (strain 70-15 / ATCC MYA-4617 / FGSC 8958) (Rice blast fungus), this protein is Host transcription reprogramming factor 1.